Reading from the N-terminus, the 443-residue chain is Tryptophan synthase beta chain (443 aa).

N6-(pyridoxal phosphate)lysine is present on Lys-110.

The protein belongs to the TrpB family. In terms of assembly, tetramer of two alpha and two beta chains. It depends on pyridoxal 5'-phosphate as a cofactor.

It catalyses the reaction (1S,2R)-1-C-(indol-3-yl)glycerol 3-phosphate + L-serine = D-glyceraldehyde 3-phosphate + L-tryptophan + H2O. Its pathway is amino-acid biosynthesis; L-tryptophan biosynthesis; L-tryptophan from chorismate: step 5/5. Its function is as follows. The beta subunit is responsible for the synthesis of L-tryptophan from indole and L-serine. The polypeptide is Tryptophan synthase beta chain (Thermococcus onnurineus (strain NA1)).